The sequence spans 163 residues: Crossover junction endodeoxyribonuclease RuvC (163 aa).

Residues Asp-4, Glu-65, and Asp-138 contribute to the active site. Mg(2+)-binding residues include Asp-4, Glu-65, and Asp-138.

The protein belongs to the RuvC family. As to quaternary structure, homodimer which binds Holliday junction (HJ) DNA. The HJ becomes 2-fold symmetrical on binding to RuvC with unstacked arms; it has a different conformation from HJ DNA in complex with RuvA. In the full resolvosome a probable DNA-RuvA(4)-RuvB(12)-RuvC(2) complex forms which resolves the HJ. It depends on Mg(2+) as a cofactor.

It is found in the cytoplasm. The enzyme catalyses Endonucleolytic cleavage at a junction such as a reciprocal single-stranded crossover between two homologous DNA duplexes (Holliday junction).. In terms of biological role, the RuvA-RuvB-RuvC complex processes Holliday junction (HJ) DNA during genetic recombination and DNA repair. Endonuclease that resolves HJ intermediates. Cleaves cruciform DNA by making single-stranded nicks across the HJ at symmetrical positions within the homologous arms, yielding a 5'-phosphate and a 3'-hydroxyl group; requires a central core of homology in the junction. The consensus cleavage sequence is 5'-(A/T)TT(C/G)-3'. Cleavage occurs on the 3'-side of the TT dinucleotide at the point of strand exchange. HJ branch migration catalyzed by RuvA-RuvB allows RuvC to scan DNA until it finds its consensus sequence, where it cleaves and resolves the cruciform DNA. In Corynebacterium jeikeium (strain K411), this protein is Crossover junction endodeoxyribonuclease RuvC.